The sequence spans 191 residues: Protein GrpE (191 aa).

The segment covering 1–10 (MNHEEQKVEA) has biased composition (basic and acidic residues). Residues 1–28 (MNHEEQKVEAMEQVEAQPVEPTDVDSEV) form a disordered region.

The protein belongs to the GrpE family. In terms of assembly, homodimer.

The protein resides in the cytoplasm. In terms of biological role, participates actively in the response to hyperosmotic and heat shock by preventing the aggregation of stress-denatured proteins, in association with DnaK and GrpE. It is the nucleotide exchange factor for DnaK and may function as a thermosensor. Unfolded proteins bind initially to DnaJ; upon interaction with the DnaJ-bound protein, DnaK hydrolyzes its bound ATP, resulting in the formation of a stable complex. GrpE releases ADP from DnaK; ATP binding to DnaK triggers the release of the substrate protein, thus completing the reaction cycle. Several rounds of ATP-dependent interactions between DnaJ, DnaK and GrpE are required for fully efficient folding. This Aeromonas hydrophila subsp. hydrophila (strain ATCC 7966 / DSM 30187 / BCRC 13018 / CCUG 14551 / JCM 1027 / KCTC 2358 / NCIMB 9240 / NCTC 8049) protein is Protein GrpE.